The primary structure comprises 738 residues: Photosystem I P700 chlorophyll a apoprotein A2 (738 aa).

8 helical membrane-spanning segments follow: residues 46–69, 135–158, 175–199, 273–291, 333–356, 372–398, 420–442, and 521–539; these read LFST…FHIA, LYQG…LHLQ, LNHH…HVAI, IAHH…GHMY, LHFQ…QHMY, AALY…IFFI, AIIS…LYVH, and FLVH…LILV. The [4Fe-4S] cluster site is built by Cys563 and Cys572. 2 helical membrane-spanning segments follow: residues 579–600 and 647–669; these read AFYL…YWHW and LAVW…MFLI. Chlorophyll a-binding residues include His658, Met666, and Tyr674. Residue Trp675 coordinates phylloquinone. Residues 711 to 731 traverse the membrane as a helical segment; sequence VVGLAHFTIGYILTYAAFLIA.

It belongs to the PsaA/PsaB family. The PsaA/B heterodimer binds the P700 chlorophyll special pair and subsequent electron acceptors. PSI consists of a core antenna complex that captures photons, and an electron transfer chain that converts photonic excitation into a charge separation. The cyanobacterial PSI reaction center is composed of one copy each of PsaA,B,C,D,E,F,I,J,K,L,M and X, and forms trimeric complexes. Requires PSI electron transfer chain: 5 chlorophyll a, 1 chlorophyll a', 2 phylloquinones and 3 4Fe-4S clusters. PSI core antenna: 90 chlorophyll a, 22 carotenoids, 3 phospholipids and 1 galactolipid. P700 is a chlorophyll a/chlorophyll a' dimer, A0 is one or more chlorophyll a, A1 is one or both phylloquinones and FX is a shared 4Fe-4S iron-sulfur center. as cofactor.

It is found in the cellular thylakoid membrane. The enzyme catalyses reduced [plastocyanin] + hnu + oxidized [2Fe-2S]-[ferredoxin] = oxidized [plastocyanin] + reduced [2Fe-2S]-[ferredoxin]. In terms of biological role, psaA and PsaB bind P700, the primary electron donor of photosystem I (PSI), as well as the electron acceptors A0, A1 and FX. PSI is a plastocyanin/cytochrome c6-ferredoxin oxidoreductase, converting photonic excitation into a charge separation, which transfers an electron from the donor P700 chlorophyll pair to the spectroscopically characterized acceptors A0, A1, FX, FA and FB in turn. Oxidized P700 is reduced on the lumenal side of the thylakoid membrane by plastocyanin or cytochrome c6. The chain is Photosystem I P700 chlorophyll a apoprotein A2 from Synechococcus sp. (strain WH7803).